A 211-amino-acid polypeptide reads, in one-letter code: Peptidyl-prolyl cis-trans isomerase FKBP14 (211 aa).

An N-terminal signal peptide occupies residues 1–19 (MRLFLWNAVLTLFVTSLIG). An intrachain disulfide couples Cys-38 to Cys-96. Residues 45-135 (GDLMLVHYEG…IFNIDLLEIR (91 aa)) form the PPIase FKBP-type domain. Residues 135-170 (RNGPRSHESFQEMDLNDDWKLSKDEVKAYLKKEFEK) enclose the EF-hand 1 domain. 5 residues coordinate Ca(2+): Asp-148, Asn-150, Asp-152, Lys-154, and Glu-159. Asn-176 carries an N-linked (GlcNAc...) asparagine glycan. Residues 179–211 (HHDALVEDIFDKEDEDKDGFISAREFTYKHDEL) enclose the EF-hand 2 domain. Positions 192, 194, 196, 198, and 203 each coordinate Ca(2+). The Prevents secretion from ER signature appears at 208-211 (HDEL).

Monomer. Homodimer. Interacts with type III, type IV and type X collagens.

It is found in the endoplasmic reticulum lumen. It catalyses the reaction [protein]-peptidylproline (omega=180) = [protein]-peptidylproline (omega=0). Its activity is regulated as follows. Inhibited by tacrolimus/FK506. Functionally, PPIase which accelerates the folding of proteins during protein synthesis. Has a preference for substrates containing 4-hydroxylproline modifications, including type III collagen. May also target type VI and type X collagens. This Homo sapiens (Human) protein is Peptidyl-prolyl cis-trans isomerase FKBP14 (FKBP14).